Here is a 189-residue protein sequence, read N- to C-terminus: Ribosome hibernation promotion factor (189 aa).

This sequence belongs to the HPF/YfiA ribosome-associated protein family. Long HPF subfamily. In terms of assembly, interacts with 100S ribosomes. Not associated with 70S ribosome monomers, about 1 monomer per ribosome.

The protein resides in the cytoplasm. Required for dimerization of active 70S ribosomes into 100S ribosomes in stationary phase; 100S ribosomes are translationally inactive and sometimes present during exponential growth. May not be the only factor implicated. Might negatively regulate the activity of the sigma-54 factor (SigL). The polypeptide is Ribosome hibernation promotion factor (yvyD) (Bacillus subtilis (strain 168)).